The primary structure comprises 103 residues: Large ribosomal subunit protein uL24 (103 aa).

This sequence belongs to the universal ribosomal protein uL24 family. In terms of assembly, part of the 50S ribosomal subunit.

Functionally, one of two assembly initiator proteins, it binds directly to the 5'-end of the 23S rRNA, where it nucleates assembly of the 50S subunit. In terms of biological role, one of the proteins that surrounds the polypeptide exit tunnel on the outside of the subunit. The chain is Large ribosomal subunit protein uL24 from Rhizobium meliloti (strain 1021) (Ensifer meliloti).